The primary structure comprises 279 residues: Tumor necrosis factor ligand superfamily member 6 (279 aa).

The Cytoplasmic segment spans residues methionine 1 to asparagine 78. The tract at residues phenylalanine 30–leucine 70 is disordered. A compositionally biased stretch (pro residues) spans proline 45 to threonine 68. The helical; Signal-anchor for type II membrane protein transmembrane segment at leucine 79–tyrosine 100 threads the bilayer. Topologically, residues glutamine 101 to leucine 279 are extracellular. Asparagine 117 is a glycosylation site (N-linked (GlcNAc...) asparagine). The span at glutamate 126–proline 135 shows a compositional bias: polar residues. Residues glutamate 126 to asparagine 150 are disordered. The THD domain occupies serine 143–leucine 279. An N-linked (GlcNAc...) asparagine glycan is attached at asparagine 182. Residues cysteine 200 and cysteine 231 are joined by a disulfide bond. N-linked (GlcNAc...) asparagine glycosylation is found at asparagine 248 and asparagine 258.

The protein belongs to the tumor necrosis factor family. In terms of assembly, homotrimer. Interacts with ARHGAP9, BAIAP2L1, BTK, CACNB3, CACNB4, CRK, DLG2, DNMBP, DOCK4, EPS8L3, FGR, FYB1, FYN, HCK, ITK, ITSN2, KALRN, LYN, MACC1, MIA, MPP4, MYO15A, NCF1, NCK1, NCK2, NCKIPSD, OSTF1, PIK3R1, PSTPIP1, RIMBP3C, SAMSN1, SH3GL3, SH3PXD2B, SH3PXD2A, SH3RF2, SKAP2, SNX33, SNX9, SORBS3, SPTA1, SRC, SRGAP1, SRGAP2, SRGAP3, TEC, TJP3 and YES1. Post-translationally, the soluble form derives from the membrane form by proteolytic processing. The membrane-bound form undergoes two successive intramembrane proteolytic cleavages. The first one is processed by ADAM10 producing an N-terminal fragment, which lacks the receptor-binding extracellular domain. This ADAM10-processed FasL (FAsL APL) remnant form is still membrane anchored and further processed by SPPL2A that liberates the FasL intracellular domain (FasL ICD). FasL shedding by ADAM10 is a prerequisite for subsequent intramembrane cleavage by SPPL2A in T-cells. Phosphorylated by FGR on tyrosine residues; this is required for ubiquitination and subsequent internalization. In terms of processing, N-glycosylated. Glycosylation enhances apoptotic activity. Post-translationally, monoubiquitinated. Expressed in T-cells. Expressed in natural killer cells.

Its subcellular location is the cell membrane. It is found in the cytoplasmic vesicle lumen. It localises to the lysosome lumen. The protein localises to the secreted. The protein resides in the nucleus. In terms of biological role, cytokine that binds to TNFRSF6/FAS, a receptor that transduces the apoptotic signal into cells. Involved in cytotoxic T-cell-mediated apoptosis, natural killer cell-mediated apoptosis and in T-cell development. Initiates fratricidal/suicidal activation-induced cell death (AICD) in antigen-activated T-cells contributing to the termination of immune responses. TNFRSF6/FAS-mediated apoptosis also has a role in the induction of peripheral tolerance. Binds to TNFRSF6B/DcR3, a decoy receptor that blocks apoptosis. Functionally, induces FAS-mediated activation of NF-kappa-B, initiating non-apoptotic signaling pathways. Can induce apoptosis but does not appear to be essential for this process. Its function is as follows. Cytoplasmic form induces gene transcription inhibition. This chain is Tumor necrosis factor ligand superfamily member 6 (Faslg), found in Mus musculus (Mouse).